We begin with the raw amino-acid sequence, 262 residues long: MDLITKFHLKNNLNRYNSFLEKAIKIHGNQYSYNKVYYITREDPVLILCNSCELSFLITPKKHLNKDTGQCPNCFPNKKQLRELQFIQQLLDIYGNQFDYSKISYQKSKHPVSIICAGCKFLIKKTPFELLRKKIHCPKCEPFKEYDSKSIVRCKITTQEFIKRAKERHGDRYDYSKTEYISMDDFVTIKCNNCSTEFNKKPKHHLKSVHKCCYIECKSIDKNQSPINSYRESILEKSKIITEKNTDNTQIESQEWLKWLNI.

This is an uncharacterized protein from Acanthamoeba polyphaga mimivirus (APMV).